We begin with the raw amino-acid sequence, 317 residues long: Small ribosomal subunit protein RACK1 (317 aa).

7 WD repeats span residues 13-44 (GHSG…IMWK), 61-91 (GHSH…RLWD), 103-133 (GHTK…KLWN), 146-178 (SHTE…KVWN), 190-220 (GHTG…MLWD), 231-260 (DGGD…KIWD), and 281-311 (AEPP…RVWQ).

The protein belongs to the WD repeat G protein beta family. Ribosomal protein RACK1 subfamily.

The protein localises to the cytoplasm. In terms of biological role, involved in the recruitment, assembly and/or regulation of a variety of signaling molecules. Interacts with a wide variety of proteins and plays a role in many cellular processes. Required for VANGL2 membrane localization, inhibits Wnt signaling and regulates cellular polarization and oriented cell division during gastrulation. In Danio rerio (Zebrafish), this protein is Small ribosomal subunit protein RACK1 (gnb2l1).